We begin with the raw amino-acid sequence, 316 residues long: N-acetyl-gamma-glutamyl-phosphate reductase (316 aa).

C136 is a catalytic residue.

Belongs to the NAGSA dehydrogenase family. Type 1 subfamily.

It is found in the cytoplasm. The enzyme catalyses N-acetyl-L-glutamate 5-semialdehyde + phosphate + NADP(+) = N-acetyl-L-glutamyl 5-phosphate + NADPH + H(+). It functions in the pathway amino-acid biosynthesis; L-arginine biosynthesis; N(2)-acetyl-L-ornithine from L-glutamate: step 3/4. Its function is as follows. Catalyzes the NADPH-dependent reduction of N-acetyl-5-glutamyl phosphate to yield N-acetyl-L-glutamate 5-semialdehyde. The sequence is that of N-acetyl-gamma-glutamyl-phosphate reductase from Xanthomonas campestris pv. campestris (strain 8004).